Here is a 438-residue protein sequence, read N- to C-terminus: Glycerophosphocholine cholinephosphodiesterase ENPP6 (438 aa).

The first 22 residues, 1–22 (MTRTLLKIYTLFILLLCRQRDA), serve as a signal peptide directing secretion. The substrate site is built by aspartate 32, serine 69, and asparagine 90. 2 residues coordinate Zn(2+): aspartate 32 and serine 69. Serine 69 (nucleophile) is an active-site residue. Serine 69 carries the phosphoserine modification. Cysteine 140 and cysteine 152 form a disulfide bridge. Residues 162-226 (KNLTDSMENA…ILNQKIREKN (65 aa)) are a coiled coil. A glycan (N-linked (GlcNAc...) asparagine) is linked at asparagine 163. Aspartate 191 is a substrate binding site. The Zn(2+) site is built by aspartate 191, histidine 195, aspartate 238, and histidine 239. Histidine 239 is a substrate binding site. N-linked (GlcNAc...) asparagine glycosylation is found at asparagine 258, asparagine 287, and asparagine 339. Histidine 352 contributes to the substrate binding site. Histidine 352 serves as a coordination point for Zn(2+). Residue asparagine 402 is glycosylated (N-linked (GlcNAc...) asparagine). The GPI-anchor amidated serine moiety is linked to residue serine 415. Positions 416–438 (AATAGASLISCCFLLLLTLTGVC) are cleaved as a propeptide — removed in mature form.

The protein belongs to the nucleotide pyrophosphatase/phosphodiesterase family. Zn(2+) is required as a cofactor.

It localises to the cell membrane. It carries out the reaction sn-glycerol 3-phosphocholine + H2O = phosphocholine + glycerol + H(+). The catalysed reaction is a 1-acyl-sn-glycero-3-phosphocholine + H2O = a 1-acyl-sn-glycerol + phosphocholine + H(+). It catalyses the reaction a 1-O-alkyl-sn-glycero-3-phosphocholine + H2O = a 1-O-alkyl-sn-glycerol + phosphocholine + H(+). The enzyme catalyses 1-dodecanoyl-sn-glycero-3-phosphocholine + H2O = 1-dodecanoyl-sn-glycerol + phosphocholine + H(+). It carries out the reaction 1-hexadecanoyl-sn-glycero-3-phosphocholine + H2O = 1-hexadecanoyl-sn-glycerol + phosphocholine + H(+). The catalysed reaction is 1-(5Z,8Z,11Z,14Z-eicosatetraenoyl)-sn-glycero-3-phosphocholine + H2O = 1-(5Z,8Z,11Z,14Z-eicosatetraenoyl)-sn-glycerol + phosphocholine + H(+). It catalyses the reaction 1-tetradecanoyl-sn-glycero-3-phosphocholine + H2O = 1-tetradecanoyl-sn-glycerol + phosphocholine + H(+). The enzyme catalyses sphing-4-enine-phosphocholine + H2O = sphing-4-enine + phosphocholine + H(+). It carries out the reaction 1-(9Z-octadecenoyl)-sn-glycero-3-phosphocholine + H2O = 1-(9Z-octadecenoyl)-sn-glycerol + phosphocholine + H(+). The catalysed reaction is 1-(9Z,12Z)-octadecadienoyl-sn-glycero-3-phosphocholine + H2O = 1-(9Z,12Z-octadecadienoyl)-sn-glycerol + phosphocholine + H(+). It catalyses the reaction glycero-2-phosphocholine + H2O = phosphocholine + glycerol + H(+). In terms of biological role, choline-specific glycerophosphodiesterase that hydrolyzes glycerophosphocholine (GPC) and lysophosphatidylcholine (LPC) and contributes to supplying choline to the cells. Has a preference for LPC with short (12:0 and 14:0) or polyunsaturated (18:2 and 20:4) fatty acids. In vitro, hydrolyzes only choline-containing lysophospholipids, such as sphingosylphosphorylcholine (SPC), platelet-activating factor (PAF) and lysoPAF, but not other lysophospholipids. The protein is Glycerophosphocholine cholinephosphodiesterase ENPP6 of Danio rerio (Zebrafish).